The sequence spans 411 residues: Isocitrate dehydrogenase [NADP] peroxisomal (411 aa).

NADP(+) contacts are provided by residues 78–80 and R85; that span reads TIT. T80 contributes to the substrate binding site. Substrate is bound by residues 97–103, R112, and R135; that span reads SPNGTLR. Residue D254 coordinates Mn(2+). K262 lines the NADP(+) pocket. D277 is a Mn(2+) binding site. Residues 312–317 and N330 each bind NADP(+); that span reads GTVTRH.

Belongs to the isocitrate and isopropylmalate dehydrogenases family. Mg(2+) is required as a cofactor. The cofactor is Mn(2+).

It is found in the peroxisome. It catalyses the reaction D-threo-isocitrate + NADP(+) = 2-oxoglutarate + CO2 + NADPH. In terms of biological role, may play a role in N-alkane metabolism, glutamate synthesis, and/or NADPH generation in the peroxisomes. This Candida tropicalis (Yeast) protein is Isocitrate dehydrogenase [NADP] peroxisomal (IDP2).